Here is a 441-residue protein sequence, read N- to C-terminus: FAM10 family protein At4g22670 (441 aa).

A disordered region spans residues 41-114; the sequence is KIPTGVHEED…PQKMGDSSVE (74 aa). A compositionally biased stretch (basic and acidic residues) spans 46–55; sequence VHEEDKDTKP. 2 stretches are compositionally biased toward acidic residues: residues 61 to 71 and 78 to 102; these read EESDDDMDETE and EEEE…EPDN. Serine 63 and serine 89 each carry phosphoserine. TPR repeat units follow at residues 121–156, 158–190, and 191–224; these read EAAQ…NPTS, IMYG…NPDS, and AKGY…DYDE. A coiled-coil region spans residues 236 to 285; that stretch reads NAHKLEEHRRKYDRLRKEREDKKAERDRLRRRAEAQAAYDKAKKEEQSSS. Positions 244–282 are enriched in basic and acidic residues; the sequence is RRKYDRLRKEREDKKAERDRLRRRAEAQAAYDKAKKEEQ. Residues 244 to 314 form a disordered region; sequence RRKYDRLRKE…MPGGFPGGMG (71 aa). Over residues 289–314 the composition is skewed to gly residues; the sequence is SGGGFPGGMPGGFPGGMPGGFPGGMG. One can recognise an STI1 domain in the interval 391–430; sequence DPELMTAFSDPEVMAALQDVMKNPANLAKHQANPKVAPVI.

It belongs to the FAM10 family.

This Arabidopsis thaliana (Mouse-ear cress) protein is FAM10 family protein At4g22670.